A 132-amino-acid chain; its full sequence is Small ribosomal subunit protein uS8 (132 aa).

This sequence belongs to the universal ribosomal protein uS8 family. Part of the 30S ribosomal subunit. Contacts proteins S5 and S12.

Functionally, one of the primary rRNA binding proteins, it binds directly to 16S rRNA central domain where it helps coordinate assembly of the platform of the 30S subunit. The sequence is that of Small ribosomal subunit protein uS8 from Geobacter sulfurreducens (strain ATCC 51573 / DSM 12127 / PCA).